A 315-amino-acid polypeptide reads, in one-letter code: 4-hydroxy-3-methylbut-2-enyl diphosphate reductase (315 aa).

Position 12 (C12) interacts with [4Fe-4S] cluster. 2 residues coordinate (2E)-4-hydroxy-3-methylbut-2-enyl diphosphate: H43 and H81. Dimethylallyl diphosphate is bound by residues H43 and H81. The isopentenyl diphosphate site is built by H43 and H81. C103 is a [4Fe-4S] cluster binding site. H131 lines the (2E)-4-hydroxy-3-methylbut-2-enyl diphosphate pocket. H131 is a dimethylallyl diphosphate binding site. H131 contacts isopentenyl diphosphate. The active-site Proton donor is the E133. Residue T170 participates in (2E)-4-hydroxy-3-methylbut-2-enyl diphosphate binding. C198 is a binding site for [4Fe-4S] cluster. (2E)-4-hydroxy-3-methylbut-2-enyl diphosphate-binding residues include S226, N228, and S271. Positions 226, 228, and 271 each coordinate dimethylallyl diphosphate. Residues S226, N228, and S271 each contribute to the isopentenyl diphosphate site.

Belongs to the IspH family. [4Fe-4S] cluster serves as cofactor.

It carries out the reaction isopentenyl diphosphate + 2 oxidized [2Fe-2S]-[ferredoxin] + H2O = (2E)-4-hydroxy-3-methylbut-2-enyl diphosphate + 2 reduced [2Fe-2S]-[ferredoxin] + 2 H(+). The enzyme catalyses dimethylallyl diphosphate + 2 oxidized [2Fe-2S]-[ferredoxin] + H2O = (2E)-4-hydroxy-3-methylbut-2-enyl diphosphate + 2 reduced [2Fe-2S]-[ferredoxin] + 2 H(+). The protein operates within isoprenoid biosynthesis; dimethylallyl diphosphate biosynthesis; dimethylallyl diphosphate from (2E)-4-hydroxy-3-methylbutenyl diphosphate: step 1/1. It participates in isoprenoid biosynthesis; isopentenyl diphosphate biosynthesis via DXP pathway; isopentenyl diphosphate from 1-deoxy-D-xylulose 5-phosphate: step 6/6. Its function is as follows. Catalyzes the conversion of 1-hydroxy-2-methyl-2-(E)-butenyl 4-diphosphate (HMBPP) into a mixture of isopentenyl diphosphate (IPP) and dimethylallyl diphosphate (DMAPP). Acts in the terminal step of the DOXP/MEP pathway for isoprenoid precursor biosynthesis. This chain is 4-hydroxy-3-methylbut-2-enyl diphosphate reductase, found in Anoxybacillus flavithermus (strain DSM 21510 / WK1).